Consider the following 956-residue polypeptide: Calsyntenin-3 (956 aa).

An N-terminal signal peptide occupies residues 1-19 (MTLLLLPLLLASLLASCSC). The Extracellular segment spans residues 20–847 (NKANKHKPWI…SHRNSMIPSA (828 aa)). 2 Cadherin domains span residues 29–145 (IEAE…APVF) and 146–246 (VERL…KPSW). 5 N-linked (GlcNAc...) asparagine glycosylation sites follow: Asn-299, Asn-327, Asn-347, Asn-507, and Asn-740. The chain crosses the membrane as a helical span at residues 848–868 (ATLIIVVCVGFLVLMVVLGLV). Over 869 to 956 (RIHSLHRRVS…RIIETPPHRY (88 aa)) the chain is Cytoplasmic. Positions 917-956 (ACVTGAVGGQQEDEDSSDSEVADSPSSDERRIIETPPHRY) are disordered. Acidic residues predominate over residues 927–937 (QEDEDSSDSEV). Positions 943 to 956 (SDERRIIETPPHRY) are enriched in basic and acidic residues.

The protein belongs to the calsyntenin family. In terms of assembly, interacts (via cadherin domains) with both alpha and beta isoforms of neurexins (NRXN1, NRXN2 and NRXN3). Directly interacts with APBA2. Forms a tripartite complex with APBA2 and APP. Interacts with low affinity with KLC1. Interacts with SLC23A2/SVCT2. Post-translationally, proteolytically processed under normal cellular conditions. A primary zeta-cleavage generates a large extracellular (soluble) N-terminal domain (sAlc) and a short C-terminal transmembrane fragment (CTF1). A secondary cleavage catalyzed by gamma-secretase within the transmembrane domain releases the beta-Alc-beta chain in the extracellular milieu and produces an intracellular fragment (AlcICD). This processing is strongly suppressed in the tripartite complex formed with APBA2 and APP, which seems to prevent the association with gamma-secretase.

It localises to the postsynaptic cell membrane. The protein localises to the endoplasmic reticulum membrane. It is found in the golgi apparatus membrane. Its subcellular location is the cell projection. The protein resides in the dendrite. Postsynaptic adhesion molecule that binds to presynaptic neurexins to mediate both excitatory and inhibitory synapse formation. Promotes synapse development by acting as a cell adhesion molecule at the postsynaptic membrane, which associates with both neurexin-alpha and neurexin-beta proteins at the presynaptic membrane. Regulates the balance between excitatory and inhibitory synapses by inhibiting formation of excitatory parallel-fiber synapses and promoting formation of inhibitory synapses in the same neuron. May also be involved in ascorbate (vitamin C) uptake via its interaction with SLC23A2/SVCT2. Complex formation with APBA2 and APP, stabilizes APP metabolism and enhances APBA2-mediated suppression of beta-APP40 secretion, due to the retardation of intracellular APP maturation. This Pongo abelii (Sumatran orangutan) protein is Calsyntenin-3 (CLSTN3).